A 398-amino-acid chain; its full sequence is Probable peptidoglycan glycosyltransferase FtsW (398 aa).

Residues M1–R20 lie on the Cytoplasmic side of the membrane. Residues F21–M41 form a helical membrane-spanning segment. Over V42–S57 the chain is Periplasmic. Residues F58 to A78 form a helical membrane-spanning segment. Residues A79 to S92 lie on the Cytoplasmic side of the membrane. Residues L93–V113 form a helical membrane-spanning segment. Over N114–N121 the chain is Periplasmic. A helical transmembrane segment spans residues L122–A142. Over G143–R153 the chain is Cytoplasmic. Residues T154 to L174 traverse the membrane as a helical segment. The Periplasmic segment spans residues K175–P177. Residues D178–A198 traverse the membrane as a helical segment. Residue R199 is a topological domain, cytoplasmic. Residues L200–T220 traverse the membrane as a helical segment. Topologically, residues A221 to G289 are periplasmic. Residues L290–I310 traverse the membrane as a helical segment. Residues G311–G318 are Cytoplasmic-facing. Residues N319–I339 traverse the membrane as a helical segment. The Periplasmic portion of the chain corresponds to N340–L355. The helical transmembrane segment at P356 to F376 threads the bilayer. Topologically, residues R377 to V398 are cytoplasmic.

The protein belongs to the SEDS family. FtsW subfamily.

It localises to the cell inner membrane. It catalyses the reaction [GlcNAc-(1-&gt;4)-Mur2Ac(oyl-L-Ala-gamma-D-Glu-L-Lys-D-Ala-D-Ala)](n)-di-trans,octa-cis-undecaprenyl diphosphate + beta-D-GlcNAc-(1-&gt;4)-Mur2Ac(oyl-L-Ala-gamma-D-Glu-L-Lys-D-Ala-D-Ala)-di-trans,octa-cis-undecaprenyl diphosphate = [GlcNAc-(1-&gt;4)-Mur2Ac(oyl-L-Ala-gamma-D-Glu-L-Lys-D-Ala-D-Ala)](n+1)-di-trans,octa-cis-undecaprenyl diphosphate + di-trans,octa-cis-undecaprenyl diphosphate + H(+). The protein operates within cell wall biogenesis; peptidoglycan biosynthesis. Peptidoglycan polymerase that is essential for cell division. This chain is Probable peptidoglycan glycosyltransferase FtsW, found in Methylococcus capsulatus (strain ATCC 33009 / NCIMB 11132 / Bath).